We begin with the raw amino-acid sequence, 619 residues long: 4-hydroxyphenylalkanoate adenylyltransferase (619 aa).

This sequence belongs to the ATP-dependent AMP-binding enzyme family.

It catalyses the reaction 17-(4-hydroxyphenyl)heptadecanoate + holo-[(phenol)carboxyphthiodiolenone synthase] + ATP = 17-(4-hydroxyphenyl)heptadecanoyl-[(phenol)carboxyphthiodiolenone synthase] + AMP + diphosphate. It carries out the reaction 19-(4-hydroxyphenyl)nonadecanoate + holo-[(phenol)carboxyphthiodiolenone synthase] + ATP = 19-(4-hydroxyphenyl)nonadecanoyl-[(phenol)carboxyphthiodiolenone synthase] + AMP + diphosphate. The enzyme catalyses dodecanoate + ATP + H(+) = dodecanoyl-AMP + diphosphate. It functions in the pathway lipid metabolism; fatty acid biosynthesis. Functionally, catalyzes the activation of long-chain fatty acids as acyl-adenylates (acyl-AMP), which are then transferred to the multifunctional polyketide synthase PpsA for further chain extension. Involved in the biosynthesis of phenolphthiocerol, which is an important intermediate in the biosynthesis of phenolic glycolipid (PGL), also called mycosid B. This Mycobacterium tuberculosis (strain ATCC 25618 / H37Rv) protein is 4-hydroxyphenylalkanoate adenylyltransferase (fadD29).